The chain runs to 615 residues: 1-deoxy-D-xylulose-5-phosphate synthase (615 aa).

Residues His-72 and 111-113 (GHS) contribute to the thiamine diphosphate site. Residue Asp-142 coordinates Mg(2+). Residues 143–144 (GA), Asn-171, Tyr-278, and Glu-360 each bind thiamine diphosphate. Position 171 (Asn-171) interacts with Mg(2+).

The protein belongs to the transketolase family. DXPS subfamily. In terms of assembly, homodimer. The cofactor is Mg(2+). It depends on thiamine diphosphate as a cofactor.

The catalysed reaction is D-glyceraldehyde 3-phosphate + pyruvate + H(+) = 1-deoxy-D-xylulose 5-phosphate + CO2. It functions in the pathway metabolic intermediate biosynthesis; 1-deoxy-D-xylulose 5-phosphate biosynthesis; 1-deoxy-D-xylulose 5-phosphate from D-glyceraldehyde 3-phosphate and pyruvate: step 1/1. Catalyzes the acyloin condensation reaction between C atoms 2 and 3 of pyruvate and glyceraldehyde 3-phosphate to yield 1-deoxy-D-xylulose-5-phosphate (DXP). The protein is 1-deoxy-D-xylulose-5-phosphate synthase of Campylobacter jejuni subsp. jejuni serotype O:2 (strain ATCC 700819 / NCTC 11168).